We begin with the raw amino-acid sequence, 342 residues long: S-adenosylmethionine:tRNA ribosyltransferase-isomerase (342 aa).

This sequence belongs to the QueA family. In terms of assembly, monomer.

It is found in the cytoplasm. It catalyses the reaction 7-aminomethyl-7-carbaguanosine(34) in tRNA + S-adenosyl-L-methionine = epoxyqueuosine(34) in tRNA + adenine + L-methionine + 2 H(+). The protein operates within tRNA modification; tRNA-queuosine biosynthesis. Transfers and isomerizes the ribose moiety from AdoMet to the 7-aminomethyl group of 7-deazaguanine (preQ1-tRNA) to give epoxyqueuosine (oQ-tRNA). The chain is S-adenosylmethionine:tRNA ribosyltransferase-isomerase from Listeria monocytogenes serotype 4b (strain F2365).